A 188-amino-acid polypeptide reads, in one-letter code: Protein salivary glands marred (188 aa).

It belongs to the TNFAIP8 family. As to quaternary structure, interacts with the Ste20-like MAP kinase msn.

The protein resides in the cytoplasm. It localises to the cytoskeleton. Functionally, important for modulating JNK signaling, cytoskeletal remodeling and autophagy in larval salivary glands. During salivary gland development, involved in the positive regulation of the JNK signaling pathway, acting downstream of the TNF ligand egr and upstream of bsk. The sequence is that of Protein salivary glands marred from Drosophila melanogaster (Fruit fly).